A 601-amino-acid polypeptide reads, in one-letter code: Glutathione-regulated potassium-efflux system protein KefB (601 aa).

The next 13 helical transmembrane spans lie at 4 to 24, 29 to 49, 55 to 75, 87 to 107, 111 to 131, 152 to 172, 177 to 197, 207 to 227, 230 to 250, 262 to 282, 284 to 304, 324 to 344, and 356 to 376; these read ADLL…VPLA, IGAV…GLGF, EILH…GLEL, IFGV…GLLM, FLWQ…TAMA, VLLF…LLAG, HFDW…LIGG, FIAA…LVLS, LFMD…GVLL, AIDP…GMSL, LGVL…LVVI, MQFA…FSTA, and ALLL…MKGI. An RCK N-terminal domain is found at 400–519; the sequence is KPQVVVVGFG…AGVTQFSRET (120 aa).

Belongs to the monovalent cation:proton antiporter 2 (CPA2) transporter (TC 2.A.37) family. KefB subfamily. In terms of assembly, interacts with the regulatory subunit KefG.

The protein resides in the cell inner membrane. Pore-forming subunit of a potassium efflux system that confers protection against electrophiles. Catalyzes K(+)/H(+) antiport. The chain is Glutathione-regulated potassium-efflux system protein KefB from Salmonella typhi.